The following is a 100-amino-acid chain: Large ribosomal subunit protein bL21 (100 aa).

The protein belongs to the bacterial ribosomal protein bL21 family. As to quaternary structure, part of the 50S ribosomal subunit. Contacts protein L20.

Its function is as follows. This protein binds to 23S rRNA in the presence of protein L20. The protein is Large ribosomal subunit protein bL21 of Mycoplasma genitalium (strain ATCC 33530 / DSM 19775 / NCTC 10195 / G37) (Mycoplasmoides genitalium).